The sequence spans 366 residues: UDP-N-acetylglucosamine--N-acetylmuramyl-(pentapeptide) pyrophosphoryl-undecaprenol N-acetylglucosamine transferase (366 aa).

Residues 22-24, Asn-134, Arg-170, Ser-198, Ile-253, and Gln-298 contribute to the UDP-N-acetyl-alpha-D-glucosamine site; that span reads TGG.

The protein belongs to the glycosyltransferase 28 family. MurG subfamily.

The protein localises to the cell inner membrane. It catalyses the reaction di-trans,octa-cis-undecaprenyl diphospho-N-acetyl-alpha-D-muramoyl-L-alanyl-D-glutamyl-meso-2,6-diaminopimeloyl-D-alanyl-D-alanine + UDP-N-acetyl-alpha-D-glucosamine = di-trans,octa-cis-undecaprenyl diphospho-[N-acetyl-alpha-D-glucosaminyl-(1-&gt;4)]-N-acetyl-alpha-D-muramoyl-L-alanyl-D-glutamyl-meso-2,6-diaminopimeloyl-D-alanyl-D-alanine + UDP + H(+). The protein operates within cell wall biogenesis; peptidoglycan biosynthesis. Functionally, cell wall formation. Catalyzes the transfer of a GlcNAc subunit on undecaprenyl-pyrophosphoryl-MurNAc-pentapeptide (lipid intermediate I) to form undecaprenyl-pyrophosphoryl-MurNAc-(pentapeptide)GlcNAc (lipid intermediate II). The protein is UDP-N-acetylglucosamine--N-acetylmuramyl-(pentapeptide) pyrophosphoryl-undecaprenol N-acetylglucosamine transferase of Xylella fastidiosa (strain M12).